A 31-amino-acid polypeptide reads, in one-letter code: Cyclotide vpub-B (31 aa).

The segment at residues 1–31 is a cross-link (cyclopeptide (Gly-Asn)); it reads GIIPCGESCVFIPCITSVVGCSCKSKVCYKN. Cystine bridges form between cysteine 5–cysteine 21, cysteine 9–cysteine 23, and cysteine 14–cysteine 28.

This sequence belongs to the cyclotide family. Bracelet subfamily. In terms of processing, this is a cyclic peptide.

Its function is as follows. Probably participates in a plant defense mechanism. The polypeptide is Cyclotide vpub-B (Viola pubescens (Downy yellow violet)).